The primary structure comprises 378 residues: 2-aminoethylphosphonate--pyruvate transaminase 1 (378 aa).

At Lys194 the chain carries N6-(pyridoxal phosphate)lysine.

It belongs to the class-V pyridoxal-phosphate-dependent aminotransferase family. PhnW subfamily. As to quaternary structure, homodimer. Pyridoxal 5'-phosphate serves as cofactor.

The enzyme catalyses (2-aminoethyl)phosphonate + pyruvate = phosphonoacetaldehyde + L-alanine. Involved in phosphonate degradation. The protein is 2-aminoethylphosphonate--pyruvate transaminase 1 of Cupriavidus pinatubonensis (strain JMP 134 / LMG 1197) (Cupriavidus necator (strain JMP 134)).